The chain runs to 2620 residues: Ubiquitin carboxyl-terminal hydrolase 24 (2620 aa).

The region spanning 3-44 is the UBA domain; sequence SEEEQHMTTLLCMGFSDPATIRKALRLAKNDINEAVALLTNE. Residues 45 to 102 form a disordered region; it reads RPGLDYGGYEPMDSGGGPSPGPGGGPRGDGGGDGGGGGPSRGGSTGGGGGFDPPPAYH. Residues 58–95 show a composition bias toward gly residues; sequence SGGGPSPGPGGGPRGDGGGDGGGGGPSRGGSTGGGGGF. Serine 63 and serine 88 each carry phosphoserine. A Phosphotyrosine modification is found at tyrosine 942. 2 disordered regions span residues 1034 to 1054 and 1129 to 1151; these read TSGS…SSSS and TLLS…QQHQ. Over residues 1131-1151 the composition is skewed to low complexity; it reads LSESSSQSSKSPSLSSKQQHQ. Residues serine 1141 and serine 1285 each carry the phosphoserine modification. One can recognise a USP domain in the interval 1689–2042; the sequence is VGLRNGGATC…NAYMLFYQRV (354 aa). Cysteine 1698 (nucleophile) is an active-site residue. The interval 1921–1945 is disordered; the sequence is ARQDSSSEVGENGRSVDQGGGGSPR. Serine 1943 is modified (phosphoserine). The active-site Proton acceptor is the histidine 1970. Phosphoserine occurs at positions 2047, 2077, and 2561. The tract at residues 2063–2090 is disordered; sequence AEDLSLSAPSSPEISPQSSPRPHRPNND. Positions 2069–2082 are enriched in low complexity; it reads SAPSSPEISPQSSP. Phosphothreonine is present on threonine 2565. Residues 2575 to 2620 are disordered; that stretch reads EKEQSGSSNGSESSPANENGDRHLQQGSESPMMIGELRSDLDDVDP. Residues 2579–2592 are compositionally biased toward low complexity; the sequence is SGSSNGSESSPANE. At serine 2604 the chain carries Phosphoserine. Residues 2611 to 2620 show a composition bias toward basic and acidic residues; it reads LRSDLDDVDP.

The protein belongs to the peptidase C19 family. As to quaternary structure, (Microbial infection) Interacts with human cytomegalovirus protein UL38.

The catalysed reaction is Thiol-dependent hydrolysis of ester, thioester, amide, peptide and isopeptide bonds formed by the C-terminal Gly of ubiquitin (a 76-residue protein attached to proteins as an intracellular targeting signal).. Ubiquitin-specific protease that regulates cell survival in various contexts through modulating the protein stability of some of its substrates including DDB2, MCL1 or TP53. Plays a positive role on ferritinophagy where ferritin is degraded in lysosomes and releases free iron. The polypeptide is Ubiquitin carboxyl-terminal hydrolase 24 (USP24) (Homo sapiens (Human)).